The following is a 393-amino-acid chain: Elongation factor Tu (393 aa).

One can recognise a tr-type G domain in the interval 10–203 (KPHVNIGTIG…AVDEFIPEPV (194 aa)). Positions 19–26 (GHVDHGKT) are G1. A GTP-binding site is contributed by 19 to 26 (GHVDHGKT). Position 26 (T26) interacts with Mg(2+). Positions 60–64 (GITIS) are G2. Positions 81–84 (DCPG) are G3. GTP is bound by residues 81–85 (DCPGH) and 136–139 (NKVD). The interval 136–139 (NKVD) is G4. A G5 region spans residues 173-175 (SAL).

It belongs to the TRAFAC class translation factor GTPase superfamily. Classic translation factor GTPase family. EF-Tu/EF-1A subfamily. As to quaternary structure, monomer.

Its subcellular location is the cytoplasm. The catalysed reaction is GTP + H2O = GDP + phosphate + H(+). In terms of biological role, GTP hydrolase that promotes the GTP-dependent binding of aminoacyl-tRNA to the A-site of ribosomes during protein biosynthesis. The protein is Elongation factor Tu of Chlorobium limicola (strain DSM 245 / NBRC 103803 / 6330).